We begin with the raw amino-acid sequence, 123 residues long: Large ribosomal subunit protein bL12 (123 aa).

It belongs to the bacterial ribosomal protein bL12 family. As to quaternary structure, homodimer. Part of the ribosomal stalk of the 50S ribosomal subunit. Forms a multimeric L10(L12)X complex, where L10 forms an elongated spine to which 2 to 4 L12 dimers bind in a sequential fashion. Binds GTP-bound translation factors.

Forms part of the ribosomal stalk which helps the ribosome interact with GTP-bound translation factors. Is thus essential for accurate translation. The polypeptide is Large ribosomal subunit protein bL12 (Mycoplasmopsis agalactiae (strain NCTC 10123 / CIP 59.7 / PG2) (Mycoplasma agalactiae)).